A 292-amino-acid chain; its full sequence is tRNA pseudouridine synthase B (292 aa).

Asp40 functions as the Nucleophile in the catalytic mechanism.

This sequence belongs to the pseudouridine synthase TruB family. Type 1 subfamily.

It catalyses the reaction uridine(55) in tRNA = pseudouridine(55) in tRNA. Its function is as follows. Responsible for synthesis of pseudouridine from uracil-55 in the psi GC loop of transfer RNAs. The chain is tRNA pseudouridine synthase B from Mycoplasma mycoides subsp. mycoides SC (strain CCUG 32753 / NCTC 10114 / PG1).